Reading from the N-terminus, the 186-residue chain is Peptidyl-tRNA hydrolase (186 aa).

Tyr14 contributes to the tRNA binding site. The Proton acceptor role is filled by His19. 3 residues coordinate tRNA: Phe65, Asn67, and Asn113.

This sequence belongs to the PTH family. As to quaternary structure, monomer.

Its subcellular location is the cytoplasm. The catalysed reaction is an N-acyl-L-alpha-aminoacyl-tRNA + H2O = an N-acyl-L-amino acid + a tRNA + H(+). Hydrolyzes ribosome-free peptidyl-tRNAs (with 1 or more amino acids incorporated), which drop off the ribosome during protein synthesis, or as a result of ribosome stalling. Its function is as follows. Catalyzes the release of premature peptidyl moieties from peptidyl-tRNA molecules trapped in stalled 50S ribosomal subunits, and thus maintains levels of free tRNAs and 50S ribosomes. The sequence is that of Peptidyl-tRNA hydrolase from Limosilactobacillus fermentum (strain NBRC 3956 / LMG 18251) (Lactobacillus fermentum).